Reading from the N-terminus, the 248-residue chain is Small ribosomal subunit protein uS3 (248 aa).

In terms of domain architecture, KH type-2 spans 39–113 (IRAYLTKQLS…TIRINVVEVT (75 aa)). A disordered region spans residues 218–248 (ERPEQKVPLQQPKRRQQRRRPTFEDRSAVEA). Basic and acidic residues predominate over residues 238-248 (PTFEDRSAVEA).

This sequence belongs to the universal ribosomal protein uS3 family. Part of the 30S ribosomal subunit. Forms a tight complex with proteins S10 and S14.

Binds the lower part of the 30S subunit head. Binds mRNA in the 70S ribosome, positioning it for translation. This is Small ribosomal subunit protein uS3 from Synechococcus sp. (strain JA-3-3Ab) (Cyanobacteria bacterium Yellowstone A-Prime).